Reading from the N-terminus, the 151-residue chain is Phosphopantetheine adenylyltransferase (151 aa).

Thr9 contributes to the substrate binding site. Residues 9 to 10 (TF) and His17 each bind ATP. Substrate is bound by residues Lys41, Thr73, and Arg87. ATP is bound by residues 88-90 (GIR), Glu98, and 122-128 (LTSISST).

Belongs to the bacterial CoaD family. In terms of assembly, homohexamer. The cofactor is Mg(2+).

The protein localises to the cytoplasm. It catalyses the reaction (R)-4'-phosphopantetheine + ATP + H(+) = 3'-dephospho-CoA + diphosphate. It functions in the pathway cofactor biosynthesis; coenzyme A biosynthesis; CoA from (R)-pantothenate: step 4/5. Its function is as follows. Reversibly transfers an adenylyl group from ATP to 4'-phosphopantetheine, yielding dephospho-CoA (dPCoA) and pyrophosphate. The polypeptide is Phosphopantetheine adenylyltransferase (Phocaeicola vulgatus (strain ATCC 8482 / DSM 1447 / JCM 5826 / CCUG 4940 / NBRC 14291 / NCTC 11154) (Bacteroides vulgatus)).